The primary structure comprises 89 residues: Small ribosomal subunit protein uS15 (89 aa).

Positions 1–18 (MSLDTAEKQKLIENHQVH) are enriched in basic and acidic residues. Residues 1-23 (MSLDTAEKQKLIENHQVHPTDTG) are disordered.

Belongs to the universal ribosomal protein uS15 family. Part of the 30S ribosomal subunit. Forms a bridge to the 50S subunit in the 70S ribosome, contacting the 23S rRNA.

In terms of biological role, one of the primary rRNA binding proteins, it binds directly to 16S rRNA where it helps nucleate assembly of the platform of the 30S subunit by binding and bridging several RNA helices of the 16S rRNA. Functionally, forms an intersubunit bridge (bridge B4) with the 23S rRNA of the 50S subunit in the ribosome. The polypeptide is Small ribosomal subunit protein uS15 (Prochlorococcus marinus (strain AS9601)).